The sequence spans 492 residues: 6-phosphogluconate dehydrogenase, decarboxylating 2 (492 aa).

NADP(+)-binding positions include 12–17 (GLAVMG), 35–37 (NRT), 77–79 (IKA), and asparagine 105. Substrate is bound by residues asparagine 105 and 131 to 133 (SGG). Catalysis depends on lysine 185, which acts as the Proton acceptor. Substrate is bound at residue 188-189 (HN). Glutamate 192 (proton donor) is an active-site residue. Residues tyrosine 193, lysine 262, arginine 289, arginine 449, and histidine 455 each coordinate substrate.

The protein belongs to the 6-phosphogluconate dehydrogenase family. In terms of assembly, homodimer.

The catalysed reaction is 6-phospho-D-gluconate + NADP(+) = D-ribulose 5-phosphate + CO2 + NADPH. The protein operates within carbohydrate degradation; pentose phosphate pathway; D-ribulose 5-phosphate from D-glucose 6-phosphate (oxidative stage): step 3/3. Catalyzes the oxidative decarboxylation of 6-phosphogluconate to ribulose 5-phosphate and CO(2), with concomitant reduction of NADP to NADPH. The sequence is that of 6-phosphogluconate dehydrogenase, decarboxylating 2 (GND2) from Saccharomyces cerevisiae (strain ATCC 204508 / S288c) (Baker's yeast).